A 528-amino-acid chain; its full sequence is Intestinal-type alkaline phosphatase (528 aa).

An N-terminal signal peptide occupies residues 1-19 (MQGPWVLLLLGLRLQLSLG). Asp61 lines the Mg(2+) pocket. 2 residues coordinate Zn(2+): Asp61 and Ser111. The active-site Phosphoserine intermediate is Ser111. Cys140 and Cys202 are joined by a disulfide. N-linked (GlcNAc...) asparagine glycosylation is present at Asn141. Ser174 contributes to the Mg(2+) binding site. A Ca(2+)-binding site is contributed by Glu235. A glycan (N-linked (GlcNAc...) asparagine) is linked at Asn268. Phe288, Glu289, and Asp304 together coordinate Ca(2+). Glu330 serves as a coordination point for Mg(2+). The Zn(2+) site is built by Asp335, His339, Asp376, and His377. An N-linked (GlcNAc...) asparagine glycan is attached at Asn429. Residue His451 coordinates Zn(2+). A disulfide bridge connects residues Cys486 and Cys493. The GPI-anchor amidated aspartate moiety is linked to residue Asp503. A propeptide spans 504-528 (AAHPVAASLPLLAGTLLLLGASAAP) (removed in mature form).

The protein belongs to the alkaline phosphatase family. As to quaternary structure, homodimer. Requires Mg(2+) as cofactor. Zn(2+) serves as cofactor. Ca(2+) is required as a cofactor.

The protein resides in the cell membrane. The enzyme catalyses a phosphate monoester + H2O = an alcohol + phosphate. Alkaline phosphatase that can hydrolyze various phosphate compounds. The sequence is that of Intestinal-type alkaline phosphatase (ALPI) from Homo sapiens (Human).